A 535-amino-acid polypeptide reads, in one-letter code: Alcohol O-acetyltransferase 2 (535 aa).

The tract at residues 19 to 36 is membrane association; sequence GHARRMGHLENYFAVLSR. Residues His189 and Asp193 each act as charge relay system in the active site. The membrane association stretch occupies residues 515-532; that stretch reads RGEWESFCKLFYQTIGEF.

It belongs to the ATF1 alcohol acetyltransferase family.

It localises to the lipid droplet. It is found in the endoplasmic reticulum membrane. It carries out the reaction an aliphatic alcohol + acetyl-CoA = an acetyl ester + CoA. In terms of biological role, can use acetyl-CoA to synthesize acetate esters from various alcohols, producing ethyl acetate, isoamyl acetate, isobutyl acetate, butyl acetate, hexyl acetate, heptyl acetate and octyl acetate. ATF2 seems to play only a minor role in the acetate ester synthesis, compared to ATF1. Plays an active role in the detoxification hydroxysteroids and possibly certain phytochemicals, in association with the efflux pumps PDR5 and SNQ2. The protein is Alcohol O-acetyltransferase 2 of Saccharomyces cerevisiae (strain ATCC 204508 / S288c) (Baker's yeast).